We begin with the raw amino-acid sequence, 330 residues long: Protein RecA (330 aa).

An ATP-binding site is contributed by Gly66 to Thr73.

This sequence belongs to the RecA family.

The protein localises to the cytoplasm. Its function is as follows. Can catalyze the hydrolysis of ATP in the presence of single-stranded DNA, the ATP-dependent uptake of single-stranded DNA by duplex DNA, and the ATP-dependent hybridization of homologous single-stranded DNAs. It interacts with LexA causing its activation and leading to its autocatalytic cleavage. The protein is Protein RecA of Bacteroides thetaiotaomicron (strain ATCC 29148 / DSM 2079 / JCM 5827 / CCUG 10774 / NCTC 10582 / VPI-5482 / E50).